The primary structure comprises 160 residues: Major allergen Pru ar 1 (160 aa).

This sequence belongs to the BetVI family.

The sequence is that of Major allergen Pru ar 1 from Prunus armeniaca (Apricot).